Here is a 338-residue protein sequence, read N- to C-terminus: UDP-N-acetylglucosamine--N-acetylmuramyl-(pentapeptide) pyrophosphoryl-undecaprenol N-acetylglucosamine transferase (338 aa).

Residues 10 to 12, N122, S177, and Q275 each bind UDP-N-acetyl-alpha-D-glucosamine; that span reads TGG.

Belongs to the glycosyltransferase 28 family. MurG subfamily.

It localises to the cell inner membrane. The catalysed reaction is di-trans,octa-cis-undecaprenyl diphospho-N-acetyl-alpha-D-muramoyl-L-alanyl-D-glutamyl-meso-2,6-diaminopimeloyl-D-alanyl-D-alanine + UDP-N-acetyl-alpha-D-glucosamine = di-trans,octa-cis-undecaprenyl diphospho-[N-acetyl-alpha-D-glucosaminyl-(1-&gt;4)]-N-acetyl-alpha-D-muramoyl-L-alanyl-D-glutamyl-meso-2,6-diaminopimeloyl-D-alanyl-D-alanine + UDP + H(+). The protein operates within cell wall biogenesis; peptidoglycan biosynthesis. Cell wall formation. Catalyzes the transfer of a GlcNAc subunit on undecaprenyl-pyrophosphoryl-MurNAc-pentapeptide (lipid intermediate I) to form undecaprenyl-pyrophosphoryl-MurNAc-(pentapeptide)GlcNAc (lipid intermediate II). The polypeptide is UDP-N-acetylglucosamine--N-acetylmuramyl-(pentapeptide) pyrophosphoryl-undecaprenol N-acetylglucosamine transferase (Sulfurovum sp. (strain NBC37-1)).